Reading from the N-terminus, the 148-residue chain is UPF0735 ACT domain-containing protein Dred_1164 (148 aa).

Positions 72–147 (TLALLMEHQP…GVREVRLVGQ (76 aa)) constitute an ACT domain.

Belongs to the UPF0735 family.

This chain is UPF0735 ACT domain-containing protein Dred_1164, found in Desulforamulus reducens (strain ATCC BAA-1160 / DSM 100696 / MI-1) (Desulfotomaculum reducens).